Consider the following 500-residue polypeptide: NAD(P)H-quinone oxidoreductase chain 4, chloroplastic (500 aa).

14 consecutive transmembrane segments (helical) span residues 4–24, 35–55, 87–107, 113–130, 134–154, 167–187, 208–228, 242–262, 272–292, 305–325, 330–350, 386–406, 411–431, and 462–482; these read FPWL…IFFL, YTIC…CYHF, IGPI…AWPI, LFHF…GSFS, LLLF…LLCM, FILY…GVAL, VLEI…SPII, HYST…YGLI, AHSI…IYAA, IAYS…SLTD, GALL…FLAG, LALP…GIIT, LLIP…LTPI, and LFLS…PDFV.

It belongs to the complex I subunit 4 family.

It is found in the plastid. The protein resides in the chloroplast thylakoid membrane. It carries out the reaction a plastoquinone + NADH + (n+1) H(+)(in) = a plastoquinol + NAD(+) + n H(+)(out). The enzyme catalyses a plastoquinone + NADPH + (n+1) H(+)(in) = a plastoquinol + NADP(+) + n H(+)(out). The protein is NAD(P)H-quinone oxidoreductase chain 4, chloroplastic of Nicotiana tomentosiformis (Tobacco).